A 491-amino-acid polypeptide reads, in one-letter code: Cytochrome P450 2F5 (491 aa).

Cys436 is a binding site for heme.

The protein belongs to the cytochrome P450 family. Heme is required as a cofactor.

The protein resides in the endoplasmic reticulum membrane. It is found in the microsome membrane. The enzyme catalyses an organic molecule + reduced [NADPH--hemoprotein reductase] + O2 = an alcohol + oxidized [NADPH--hemoprotein reductase] + H2O + H(+). In terms of biological role, cytochromes P450 are a group of heme-thiolate monooxygenases. In liver microsomes, this enzyme is involved in an NADPH-dependent electron transport pathway. It oxidizes a variety of structurally unrelated compounds, including steroids, fatty acids, and xenobiotics. This Gorilla gorilla gorilla (Western lowland gorilla) protein is Cytochrome P450 2F5 (CYP2F5).